A 107-amino-acid polypeptide reads, in one-letter code: Parvalbumin beta (107 aa).

An N-acetylserine modification is found at serine 1. EF-hand domains are found at residues 37–72 (KSLDDVKKAFYVIDQDKSGFIEEDELKLFLQNFSPS) and 76–107 (LTDAETKAFLADGDKDGDGMIGVDEFAAMIKA). Residues aspartate 50, aspartate 52, serine 54, phenylalanine 56, glutamate 58, glutamate 61, aspartate 89, aspartate 91, aspartate 93, methionine 95, and glutamate 100 each coordinate Ca(2+).

The protein belongs to the parvalbumin family.

In muscle, parvalbumin is thought to be involved in relaxation after contraction. It binds two calcium ions. The protein is Parvalbumin beta of Esox lucius (Northern pike).